A 375-amino-acid polypeptide reads, in one-letter code: MKWLSRILTVIVTMSMACGALIFNRRHQLKAKTLNFNHKALTIIIPARNEEKRIGHLLHSIIQQQVPVDVIVMNDGSTDETACVARSYGATVVDVVDDADGKWYGKSHACYQGVTHACTNRIAFVDADVTFLRKDAVEALINQYQLQGEKGLLSVQPYHITKRFYEGFSAIFNLMTVVGMNVFSTLDDGRTNQHAFGPVTLTNKEDYYATGGHKSANRHIIEGFALGSAYTSQSLPVTVYEGFPFVAFRMYQEGFQSLQEGWTKHLSTGAGGTKPKIMAAIVLWLFGSIASILGLCLSLKYRQMSVGKMLTVYLSYTTQFIYLHRRVGQFSNLLMVCHPLLFMFFTKIFIQSWKQTHRYGVVEWKGRQYSISKEQ.

4 helical membrane-spanning segments follow: residues 3–23, 164–184, 277–297, and 330–350; these read WLSRILTVIVTMSMACGALIF, FYEGFSAIFNLMTVVGMNVFS, IMAAIVLWLFGSIASILGLCL, and FSNLLMVCHPLLFMFFTKIFI.

This sequence belongs to the glycosyltransferase 2 family. CrtQ subfamily.

Its subcellular location is the cell membrane. It functions in the pathway carotenoid biosynthesis; staphyloxanthin biosynthesis; staphyloxanthin from farnesyl diphosphate: step 4/5. Functionally, catalyzes the glycosylation of 4,4'-diaponeurosporenoate, i.e. the esterification of glucose at the C1'' position with the carboxyl group of 4,4'-diaponeurosporenic acid, to form glycosyl-4,4'-diaponeurosporenoate. This is a step in the biosynthesis of staphyloxanthin, an orange pigment present in most staphylococci strains. This is 4,4'-diaponeurosporenoate glycosyltransferase (crtQ) from Staphylococcus aureus (strain MRSA252).